Reading from the N-terminus, the 234-residue chain is UPF0173 metal-dependent hydrolase R01310 (234 aa).

It belongs to the UPF0173 family.

The chain is UPF0173 metal-dependent hydrolase R01310 from Rhizobium meliloti (strain 1021) (Ensifer meliloti).